Consider the following 344-residue polypeptide: Dihydroorotase (344 aa).

Zn(2+) contacts are provided by histidine 14 and histidine 16. Substrate contacts are provided by residues 16 to 18 (HLR) and asparagine 42. Positions 99, 136, and 174 each coordinate Zn(2+). Lysine 99 is modified (N6-carboxylysine). Histidine 136 provides a ligand contact to substrate. Leucine 219 lines the substrate pocket. Zn(2+) is bound at residue aspartate 247. Aspartate 247 is an active-site residue. Substrate contacts are provided by histidine 251 and alanine 263.

It belongs to the metallo-dependent hydrolases superfamily. DHOase family. Class II DHOase subfamily. As to quaternary structure, homodimer. Zn(2+) serves as cofactor.

The enzyme catalyses (S)-dihydroorotate + H2O = N-carbamoyl-L-aspartate + H(+). The protein operates within pyrimidine metabolism; UMP biosynthesis via de novo pathway; (S)-dihydroorotate from bicarbonate: step 3/3. Catalyzes the reversible cyclization of carbamoyl aspartate to dihydroorotate. The protein is Dihydroorotase of Teredinibacter turnerae (strain ATCC 39867 / T7901).